The sequence spans 223 residues: Serine/threonine/tyrosine-interacting protein A (223 aa).

Residues 28–176 (EMQEILPGLF…LQEYEAIYLA (149 aa)) enclose the Tyrosine-protein phosphatase domain.

This sequence belongs to the protein-tyrosine phosphatase family. Non-receptor class subfamily.

Its function is as follows. Catalytically inactive phosphatase. The polypeptide is Serine/threonine/tyrosine-interacting protein A (styx-a) (Xenopus laevis (African clawed frog)).